Consider the following 274-residue polypeptide: Bis(5'-nucleosyl)-tetraphosphatase, symmetrical (274 aa).

This sequence belongs to the Ap4A hydrolase family.

It carries out the reaction P(1),P(4)-bis(5'-adenosyl) tetraphosphate + H2O = 2 ADP + 2 H(+). Functionally, hydrolyzes diadenosine 5',5'''-P1,P4-tetraphosphate to yield ADP. The sequence is that of Bis(5'-nucleosyl)-tetraphosphatase, symmetrical (apaH) from Buchnera aphidicola subsp. Acyrthosiphon pisum (strain APS) (Acyrthosiphon pisum symbiotic bacterium).